The primary structure comprises 139 residues: GSK3B-interacting protein (139 aa).

Residues 1–22 (METDCNPMELSSMSGFEEGSEL) form a disordered region. The segment at 41–45 (VNDVL) is required for PRKAR2A interaction; contributes to a protective effect against H(2)O(2)-induced apoptosis. Positions 115 to 139 (SPAYREAFGNALLQRLEALKRDGQS) are interaction with GSK3B and acts as a GSK3B inhibitor.

It belongs to the GSKIP family. Forms a complex composed of PRKAR2A or PRKAR2B, GSK3B and GSKIP through GSKIP interaction; facilitates PKA-induced phosphorylation of GSK3B leading to GSK3B inactivation; recruits DNM1L through GSK3B for PKA-mediated phosphorylation of DNM1L; promotes beta-catenin degradation through GSK3B-induced phosphorylation of beta-catenin; stabilizes beta-catenin and enhances Wnt-induced signaling through PKA-induced phosphorylation of beta-catenin. Interacts with GSK3B; induces GSK3B-mediated phosphorylation of GSKIP and inhibits GSK3B kinase activity. In terms of processing, phosphorylated by GSK3B. As to expression, detected in heart, brain, placenta, liver, skeletal muscle, kidney, testis, lung and pancreas.

It is found in the cytoplasm. The protein localises to the nucleus. A-kinase anchoring protein for GSK3B and PKA that regulates or facilitates their kinase activity towards their targets. The ternary complex enhances Wnt-induced signaling by facilitating the GSK3B- and PKA-induced phosphorylation of beta-catenin leading to beta-catenin degradation and stabilization respectively. Upon cAMP activation, the ternary complex contributes to neuroprotection against oxidative stress-induced apoptosis by facilitating the PKA-induced phosphorylation of DML1 and PKA-induced inactivation of GSK3B. During neurite outgrowth promotes neuron proliferation; while increases beta-catenin-induced transcriptional activity through GSK3B kinase activity inhibition, reduces N-cadherin level to promote cell cycle progression. The chain is GSK3B-interacting protein from Homo sapiens (Human).